The sequence spans 225 residues: uncharacterized protein (225 aa).

Residues 1–22 form the signal peptide; that stretch reads MLQHYSVSWKKGLAALCLLAVA. In terms of domain architecture, 4Fe-4S ferredoxin-type spans 161–190; the sequence is GNLTAAEEKKTGCLVCLDSCPVGIVSNATY.

This is an uncharacterized protein from Escherichia coli (strain K12).